The sequence spans 240 residues: Putative peptidoglycan hydrolase Rv2525c (240 aa).

Positions 1–33 (MSVSRRDVLKFAAATPGVLGLGVVASSLRAAPA) form a signal peptide, tat-type signal.

Predicted to be exported by the Tat system. The position of the signal peptide cleavage has not been experimentally proven.

It localises to the secreted. It catalyses the reaction Hydrolysis of (1-&gt;4)-beta-linkages between N-acetylmuramic acid and N-acetyl-D-glucosamine residues in a peptidoglycan and between N-acetyl-D-glucosamine residues in chitodextrins.. Its pathway is cell wall degradation; peptidoglycan degradation. May function as a peptidoglycan hydrolase with glycosidase activity. In vitro, displays esterase activity toward p-nitrophenyl esters of various acyl chain length (C4 to C16), with a preference for p-nitrophenyl butyrate (C4). This Mycobacterium tuberculosis (strain ATCC 25618 / H37Rv) protein is Putative peptidoglycan hydrolase Rv2525c.